We begin with the raw amino-acid sequence, 242 residues long: 4-hydroxy-tetrahydrodipicolinate reductase (242 aa).

NAD(+) contacts are provided by residues 8–13 (GAKGRM), 75–77 (GTT), and 99–102 (ATNM). The active-site Proton donor/acceptor is His131. Residue His132 coordinates (S)-2,3,4,5-tetrahydrodipicolinate. The Proton donor role is filled by Lys135. 141-142 (GT) is a (S)-2,3,4,5-tetrahydrodipicolinate binding site.

This sequence belongs to the DapB family.

Its subcellular location is the cytoplasm. The catalysed reaction is (S)-2,3,4,5-tetrahydrodipicolinate + NAD(+) + H2O = (2S,4S)-4-hydroxy-2,3,4,5-tetrahydrodipicolinate + NADH + H(+). It catalyses the reaction (S)-2,3,4,5-tetrahydrodipicolinate + NADP(+) + H2O = (2S,4S)-4-hydroxy-2,3,4,5-tetrahydrodipicolinate + NADPH + H(+). It functions in the pathway amino-acid biosynthesis; L-lysine biosynthesis via DAP pathway; (S)-tetrahydrodipicolinate from L-aspartate: step 4/4. Its function is as follows. Catalyzes the conversion of 4-hydroxy-tetrahydrodipicolinate (HTPA) to tetrahydrodipicolinate. This chain is 4-hydroxy-tetrahydrodipicolinate reductase, found in Campylobacter jejuni subsp. jejuni serotype O:2 (strain ATCC 700819 / NCTC 11168).